The primary structure comprises 468 residues: UDP-N-acetylmuramoyl-L-alanine--L-glutamate ligase (468 aa).

Position 122 to 128 (122 to 128) interacts with ATP; it reads GTKGKST.

The protein belongs to the MurCDEF family. MurD2 subfamily.

The protein localises to the cytoplasm. The enzyme catalyses UDP-N-acetyl-alpha-D-muramoyl-L-alanine + L-glutamate + ATP = UDP-N-acetyl-alpha-D-muramoyl-L-alanyl-L-glutamate + ADP + phosphate + H(+). Its pathway is cell wall biogenesis; peptidoglycan biosynthesis. In terms of biological role, cell wall formation. Catalyzes the addition of L-glutamate to the nucleotide precursor UDP-N-acetylmuramoyl-L-alanine. Has weak activity with D-glutamate. This Xanthomonas oryzae pv. oryzae (strain MAFF 311018) protein is UDP-N-acetylmuramoyl-L-alanine--L-glutamate ligase.